Consider the following 457-residue polypeptide: Cysteine--tRNA ligase (457 aa).

Position 30 (C30) interacts with Zn(2+). The 'HIGH' region signature appears at 32 to 42; it reads PTVYAPAHIGN. 3 residues coordinate Zn(2+): C221, H246, and E250. The short motif at 278–282 is the 'KMSKS' region element; sequence KMSKS. K281 contacts ATP.

This sequence belongs to the class-I aminoacyl-tRNA synthetase family. In terms of assembly, monomer. Zn(2+) is required as a cofactor.

It is found in the cytoplasm. It catalyses the reaction tRNA(Cys) + L-cysteine + ATP = L-cysteinyl-tRNA(Cys) + AMP + diphosphate. The protein is Cysteine--tRNA ligase of Opitutus terrae (strain DSM 11246 / JCM 15787 / PB90-1).